Consider the following 76-residue polypeptide: RNA-binding protein KhpA (76 aa).

The KH domain occupies serine 29–aspartate 76.

This sequence belongs to the KhpA RNA-binding protein family. Forms a complex with KhpB.

Its subcellular location is the cytoplasm. Its function is as follows. A probable RNA chaperone. Forms a complex with KhpB which binds to cellular RNA and controls its expression. Plays a role in peptidoglycan (PG) homeostasis and cell length regulation. In Halalkalibacterium halodurans (strain ATCC BAA-125 / DSM 18197 / FERM 7344 / JCM 9153 / C-125) (Bacillus halodurans), this protein is RNA-binding protein KhpA.